The primary structure comprises 258 residues: 6-carboxyhexanoate--CoA ligase (258 aa).

It belongs to the BioW family. In terms of assembly, homodimer. Mg(2+) serves as cofactor.

The enzyme catalyses heptanedioate + ATP + CoA = 6-carboxyhexanoyl-CoA + AMP + diphosphate. The protein operates within metabolic intermediate metabolism; pimeloyl-CoA biosynthesis; pimeloyl-CoA from pimelate: step 1/1. Catalyzes the transformation of pimelate into pimeloyl-CoA with concomitant hydrolysis of ATP to AMP. This chain is 6-carboxyhexanoate--CoA ligase, found in Bacillus atrophaeus (strain 1942).